A 145-amino-acid polypeptide reads, in one-letter code: Large ribosomal subunit protein uL24 (145 aa).

2 disordered regions span residues 1–21 and 122–145; these read MKFN…HFNA and KAKS…KMQE. Residue Lys136 forms a Glycyl lysine isopeptide (Lys-Gly) (interchain with G-Cter in SUMO2) linkage. Phosphothreonine is present on Thr139.

The protein belongs to the universal ribosomal protein uL24 family. In terms of assembly, component of the large ribosomal subunit. Interacts with DHX33. Ufmylated by UFL1 in response to endoplasmic reticulum stress, promoting reticulophagy of endoplasmic reticulum sheets.

The protein localises to the cytoplasm. Its function is as follows. Component of the large ribosomal subunit. The ribosome is a large ribonucleoprotein complex responsible for the synthesis of proteins in the cell. The polypeptide is Large ribosomal subunit protein uL24 (Rpl26) (Rattus norvegicus (Rat)).